A 214-amino-acid polypeptide reads, in one-letter code: Probable transaldolase (214 aa).

K83 serves as the catalytic Schiff-base intermediate with substrate.

The protein belongs to the transaldolase family. Type 3B subfamily.

Its subcellular location is the cytoplasm. The enzyme catalyses D-sedoheptulose 7-phosphate + D-glyceraldehyde 3-phosphate = D-erythrose 4-phosphate + beta-D-fructose 6-phosphate. It participates in carbohydrate degradation; pentose phosphate pathway; D-glyceraldehyde 3-phosphate and beta-D-fructose 6-phosphate from D-ribose 5-phosphate and D-xylulose 5-phosphate (non-oxidative stage): step 2/3. In terms of biological role, transaldolase is important for the balance of metabolites in the pentose-phosphate pathway. The polypeptide is Probable transaldolase (Brevibacillus brevis (strain 47 / JCM 6285 / NBRC 100599)).